We begin with the raw amino-acid sequence, 324 residues long: Beta-ketoacyl-[acyl-carrier-protein] synthase III (324 aa).

Active-site residues include Cys-112 and His-249. Residues 250–254 (QANIR) are ACP-binding. The active site involves Asn-279.

It belongs to the thiolase-like superfamily. FabH family. In terms of assembly, homodimer.

The protein localises to the cytoplasm. The enzyme catalyses malonyl-[ACP] + acetyl-CoA + H(+) = 3-oxobutanoyl-[ACP] + CO2 + CoA. It participates in lipid metabolism; fatty acid biosynthesis. Its function is as follows. Catalyzes the condensation reaction of fatty acid synthesis by the addition to an acyl acceptor of two carbons from malonyl-ACP. Catalyzes the first condensation reaction which initiates fatty acid synthesis and may therefore play a role in governing the total rate of fatty acid production. Possesses both acetoacetyl-ACP synthase and acetyl transacylase activities. Its substrate specificity determines the biosynthesis of branched-chain and/or straight-chain of fatty acids. The protein is Beta-ketoacyl-[acyl-carrier-protein] synthase III of Streptococcus sanguinis (strain SK36).